We begin with the raw amino-acid sequence, 157 residues long: Ribosome maturation factor RimP (157 aa).

This sequence belongs to the RimP family.

It is found in the cytoplasm. Required for maturation of 30S ribosomal subunits. This is Ribosome maturation factor RimP from Bacillus pumilus (strain SAFR-032).